We begin with the raw amino-acid sequence, 302 residues long: Probable protein S-acyltransferase 13 (302 aa).

Helical transmembrane passes span 17–37 and 56–76; these read SIMI…VVVV and VLAF…SVVV. The region spanning 116–166 is the DHHC domain; the sequence is RYCRKCNQYKPPRSHHCSVCGRCILKMDHHCVWVVNCVGANNYKSFLLFLF. Cysteine 146 (S-palmitoyl cysteine intermediate) is an active-site residue. The next 2 membrane-spanning stretches (helical) occupy residues 166-186 and 204-224; these read FYTF…FLVF and SFVA…FLIM.

The protein belongs to the DHHC palmitoyltransferase family.

It localises to the cell membrane. The protein localises to the cytoplasmic vesicle membrane. It carries out the reaction L-cysteinyl-[protein] + hexadecanoyl-CoA = S-hexadecanoyl-L-cysteinyl-[protein] + CoA. In terms of biological role, palmitoyl acyltransferase. The polypeptide is Probable protein S-acyltransferase 13 (PAT13) (Arabidopsis thaliana (Mouse-ear cress)).